Reading from the N-terminus, the 58-residue chain is UPF0434 protein Daro_3207 (58 aa).

It belongs to the UPF0434 family.

The chain is UPF0434 protein Daro_3207 from Dechloromonas aromatica (strain RCB).